The following is a 486-amino-acid chain: Probable glycine dehydrogenase (decarboxylating) subunit 2 (486 aa).

N6-(pyridoxal phosphate)lysine is present on Lys269.

Belongs to the GcvP family. C-terminal subunit subfamily. As to quaternary structure, the glycine cleavage system is composed of four proteins: P, T, L and H. In this organism, the P 'protein' is a heterodimer of two subunits. Pyridoxal 5'-phosphate is required as a cofactor.

The catalysed reaction is N(6)-[(R)-lipoyl]-L-lysyl-[glycine-cleavage complex H protein] + glycine + H(+) = N(6)-[(R)-S(8)-aminomethyldihydrolipoyl]-L-lysyl-[glycine-cleavage complex H protein] + CO2. In terms of biological role, the glycine cleavage system catalyzes the degradation of glycine. The P protein binds the alpha-amino group of glycine through its pyridoxal phosphate cofactor; CO(2) is released and the remaining methylamine moiety is then transferred to the lipoamide cofactor of the H protein. The polypeptide is Probable glycine dehydrogenase (decarboxylating) subunit 2 (Chlorobium phaeobacteroides (strain DSM 266 / SMG 266 / 2430)).